Here is a 250-residue protein sequence, read N- to C-terminus: UDP-2,3-diacylglucosamine hydrolase (250 aa).

Mn(2+) is bound by residues aspartate 7, histidine 9, aspartate 40, asparagine 78, and histidine 113. A substrate-binding site is contributed by 78–79 (NR). Substrate contacts are provided by aspartate 121, serine 159, threonine 163, lysine 166, and histidine 194. Positions 194 and 196 each coordinate Mn(2+).

Belongs to the LpxH family. It depends on Mn(2+) as a cofactor.

It is found in the cell inner membrane. The catalysed reaction is UDP-2-N,3-O-bis[(3R)-3-hydroxytetradecanoyl]-alpha-D-glucosamine + H2O = 2-N,3-O-bis[(3R)-3-hydroxytetradecanoyl]-alpha-D-glucosaminyl 1-phosphate + UMP + 2 H(+). Its pathway is glycolipid biosynthesis; lipid IV(A) biosynthesis; lipid IV(A) from (3R)-3-hydroxytetradecanoyl-[acyl-carrier-protein] and UDP-N-acetyl-alpha-D-glucosamine: step 4/6. In terms of biological role, hydrolyzes the pyrophosphate bond of UDP-2,3-diacylglucosamine to yield 2,3-diacylglucosamine 1-phosphate (lipid X) and UMP by catalyzing the attack of water at the alpha-P atom. Involved in the biosynthesis of lipid A, a phosphorylated glycolipid that anchors the lipopolysaccharide to the outer membrane of the cell. This chain is UDP-2,3-diacylglucosamine hydrolase, found in Pseudomonas fluorescens (strain ATCC BAA-477 / NRRL B-23932 / Pf-5).